Consider the following 43-residue polypeptide: Protein PsbN (43 aa).

A helical transmembrane segment spans residues 7–27 (ITIFLSCFLVGVTGYALYTAF).

Belongs to the PsbN family.

The protein localises to the plastid. The protein resides in the chloroplast thylakoid membrane. In terms of biological role, may play a role in photosystem I and II biogenesis. The polypeptide is Protein PsbN (Klebsormidium bilatum (Filamentous green alga)).